The primary structure comprises 472 residues: Glutamine synthetase (472 aa).

The GS beta-grasp domain maps to Y17–T101. One can recognise a GS catalytic domain in the interval P109–A472. The Mg(2+) site is built by E134 and E136. E212 lines the ATP pocket. Residues E217 and E225 each contribute to the Mg(2+) site. Residues N269–G270 and G270 each bind L-glutamate. H274 serves as a coordination point for Mg(2+). ATP contacts are provided by residues N276–S278 and S278. 3 residues coordinate L-glutamate: R326, E332, and R344. ATP is bound by residues R344, R349, and K357. E362 is a binding site for Mg(2+). R364 contacts L-glutamate. The residue at position 402 (Y402) is an O-AMP-tyrosine.

This sequence belongs to the glutamine synthetase family. In terms of assembly, oligomer of 12 subunits arranged in the form of two hexameric ring. Mg(2+) is required as a cofactor.

Its subcellular location is the cytoplasm. It catalyses the reaction L-glutamate + NH4(+) + ATP = L-glutamine + ADP + phosphate + H(+). Its activity is regulated as follows. The activity of this enzyme could be controlled by adenylation under conditions of abundant glutamine. Its function is as follows. Catalyzes the ATP-dependent biosynthesis of glutamine from glutamate and ammonia. This Pasteurella multocida (strain Pm70) protein is Glutamine synthetase.